We begin with the raw amino-acid sequence, 315 residues long: Ribosomal RNA small subunit methyltransferase H (315 aa).

Residues 35–37 (GGH), aspartate 55, phenylalanine 80, aspartate 102, and glutamine 109 contribute to the S-adenosyl-L-methionine site.

This sequence belongs to the methyltransferase superfamily. RsmH family.

The protein localises to the cytoplasm. The enzyme catalyses cytidine(1402) in 16S rRNA + S-adenosyl-L-methionine = N(4)-methylcytidine(1402) in 16S rRNA + S-adenosyl-L-homocysteine + H(+). Its function is as follows. Specifically methylates the N4 position of cytidine in position 1402 (C1402) of 16S rRNA. This Shewanella halifaxensis (strain HAW-EB4) protein is Ribosomal RNA small subunit methyltransferase H.